The primary structure comprises 243 residues: uncharacterized protein (243 aa).

The protein resides in the nucleus. It is found in the nucleolus. This is an uncharacterized protein from Schizosaccharomyces pombe (strain 972 / ATCC 24843) (Fission yeast).